The chain runs to 230 residues: Probable methylthioribulose-1-phosphate dehydratase (230 aa).

Cys87 serves as a coordination point for substrate. His105 and His107 together coordinate Zn(2+). Glu129 acts as the Proton donor/acceptor in catalysis. Zn(2+) is bound at residue His185.

It belongs to the aldolase class II family. MtnB subfamily. The cofactor is Zn(2+).

Its subcellular location is the cytoplasm. The enzyme catalyses 5-(methylsulfanyl)-D-ribulose 1-phosphate = 5-methylsulfanyl-2,3-dioxopentyl phosphate + H2O. It functions in the pathway amino-acid biosynthesis; L-methionine biosynthesis via salvage pathway; L-methionine from S-methyl-5-thio-alpha-D-ribose 1-phosphate: step 2/6. Functionally, catalyzes the dehydration of methylthioribulose-1-phosphate (MTRu-1-P) into 2,3-diketo-5-methylthiopentyl-1-phosphate (DK-MTP-1-P). This Drosophila grimshawi (Hawaiian fruit fly) protein is Probable methylthioribulose-1-phosphate dehydratase.